Reading from the N-terminus, the 299-residue chain is tRNA dimethylallyltransferase (299 aa).

11–18 contributes to the ATP binding site; sequence GPTAVGKT. 13-18 is a substrate binding site; that stretch reads TAVGKT. Residues 36–39 form an interaction with substrate tRNA region; sequence DSQQ.

This sequence belongs to the IPP transferase family. In terms of assembly, monomer. Mg(2+) is required as a cofactor.

It catalyses the reaction adenosine(37) in tRNA + dimethylallyl diphosphate = N(6)-dimethylallyladenosine(37) in tRNA + diphosphate. Its function is as follows. Catalyzes the transfer of a dimethylallyl group onto the adenine at position 37 in tRNAs that read codons beginning with uridine, leading to the formation of N6-(dimethylallyl)adenosine (i(6)A). The chain is tRNA dimethylallyltransferase from Streptococcus pyogenes serotype M49 (strain NZ131).